A 137-amino-acid polypeptide reads, in one-letter code: Large ribosomal subunit protein uL16 (137 aa).

Belongs to the universal ribosomal protein uL16 family. Part of the 50S ribosomal subunit.

Binds 23S rRNA and is also seen to make contacts with the A and possibly P site tRNAs. The chain is Large ribosomal subunit protein uL16 from Bradyrhizobium sp. (strain ORS 278).